A 374-amino-acid chain; its full sequence is Type IV pilus assembly protein PilC (374 aa).

The next 3 helical transmembrane spans lie at 138–158 (AMTY…ILLI), 187–207 (EFLQ…GFTF), and 347–367 (IMAV…LPIF).

This sequence belongs to the GSP F family. Homotetramer. Interacts with PilB.

It is found in the cell inner membrane. In terms of biological role, essential inner membrane component of the type IV pilus (T4P) that plays a role in surface and host cell adhesion, colonization, biofilm maturation, virulence, and twitching, a form of surface-associated motility facilitated by cycles of extension, adhesion, and retraction of T4P fibers. Controls both pilus assembly and disassembly and plays an important role in PilB localization to the complex and ATPase activity. The sequence is that of Type IV pilus assembly protein PilC (pilC) from Pseudomonas aeruginosa (strain ATCC 15692 / DSM 22644 / CIP 104116 / JCM 14847 / LMG 12228 / 1C / PRS 101 / PAO1).